The sequence spans 68 residues: DNA-directed RNA polymerase subunit omega (68 aa).

Belongs to the RNA polymerase subunit omega family. The RNAP catalytic core consists of 2 alpha, 1 beta, 1 beta' and 1 omega subunit. When a sigma factor is associated with the core the holoenzyme is formed, which can initiate transcription.

It catalyses the reaction RNA(n) + a ribonucleoside 5'-triphosphate = RNA(n+1) + diphosphate. Its function is as follows. Promotes RNA polymerase assembly. Latches the N- and C-terminal regions of the beta' subunit thereby facilitating its interaction with the beta and alpha subunits. In Desulfatibacillum aliphaticivorans, this protein is DNA-directed RNA polymerase subunit omega.